Consider the following 459-residue polypeptide: mRNA-capping enzyme subunit alpha (459 aa).

The active-site N6-GMP-lysine intermediate is lysine 70. The disordered stretch occupies residues 415-459; it reads MAGGSGRPLPSQSQNATLSTSKPVHSQPPSNDKEPKYVDEDDWSD. Positions 424–444 are enriched in polar residues; the sequence is PSQSQNATLSTSKPVHSQPPS.

Belongs to the eukaryotic GTase family. In terms of assembly, heterodimer. The mRNA-capping enzyme is composed of two separate chains alpha and beta, respectively a mRNA guanylyltransferase and an mRNA 5'-triphosphate monophosphatase.

It is found in the nucleus. The catalysed reaction is a 5'-end diphospho-ribonucleoside in mRNA + GTP + H(+) = a 5'-end (5'-triphosphoguanosine)-ribonucleoside in mRNA + diphosphate. Its function is as follows. Second step of mRNA capping. Transfer of the GMP moiety of GTP to the 5'-diphosphate terminus of RNA via a covalent enzyme-GMP reaction intermediate. This Saccharomyces cerevisiae (strain ATCC 204508 / S288c) (Baker's yeast) protein is mRNA-capping enzyme subunit alpha (CEG1).